The primary structure comprises 443 residues: ATP-dependent protease ATPase subunit HslU (443 aa).

ATP contacts are provided by residues isoleucine 18, 60 to 65, aspartate 256, glutamate 321, and arginine 393; that span reads GVGKTE.

Belongs to the ClpX chaperone family. HslU subfamily. A double ring-shaped homohexamer of HslV is capped on each side by a ring-shaped HslU homohexamer. The assembly of the HslU/HslV complex is dependent on binding of ATP.

The protein localises to the cytoplasm. Functionally, ATPase subunit of a proteasome-like degradation complex; this subunit has chaperone activity. The binding of ATP and its subsequent hydrolysis by HslU are essential for unfolding of protein substrates subsequently hydrolyzed by HslV. HslU recognizes the N-terminal part of its protein substrates and unfolds these before they are guided to HslV for hydrolysis. The sequence is that of ATP-dependent protease ATPase subunit HslU from Escherichia fergusonii (strain ATCC 35469 / DSM 13698 / CCUG 18766 / IAM 14443 / JCM 21226 / LMG 7866 / NBRC 102419 / NCTC 12128 / CDC 0568-73).